The primary structure comprises 84 residues: U1-theraphotoxin-Hs1a (84 aa).

Positions 1 to 22 (MKVTLIAILTCAAVLVLHTTAA) are cleaved as a signal peptide. Residues 23–48 (EELEESQLMEVGMPDTELAAVDEERL) constitute a propeptide that is removed on maturation. 3 disulfide bridges follow: Cys-51-Cys-65, Cys-55-Cys-76, and Cys-70-Cys-81.

Belongs to the neurotoxin 12 (Hwtx-2) family. 02 (Hwtx-2) subfamily. Expressed by the venom gland.

The protein resides in the secreted. Blocks neuromuscular transmission. Acts cooperatively to potentiate the activity of huwentoxin-I. Paralyzes locusts and kills mice following intracerebroventricular injection. This is U1-theraphotoxin-Hs1a from Cyriopagopus schmidti (Chinese bird spider).